The primary structure comprises 570 residues: Formate--tetrahydrofolate ligase (570 aa).

An ATP-binding site is contributed by 65 to 72 (TPFGEGKT).

The protein belongs to the formate--tetrahydrofolate ligase family.

The enzyme catalyses (6S)-5,6,7,8-tetrahydrofolate + formate + ATP = (6R)-10-formyltetrahydrofolate + ADP + phosphate. Its pathway is one-carbon metabolism; tetrahydrofolate interconversion. This Shewanella sediminis (strain HAW-EB3) protein is Formate--tetrahydrofolate ligase.